The following is a 422-amino-acid chain: UDP-N-acetylglucosamine 1-carboxyvinyltransferase (422 aa).

22-23 is a binding site for phosphoenolpyruvate; that stretch reads KN. Arginine 94 contributes to the UDP-N-acetyl-alpha-D-glucosamine binding site. Cysteine 118 serves as the catalytic Proton donor. At cysteine 118 the chain carries 2-(S-cysteinyl)pyruvic acid O-phosphothioketal. Residues 123–127, aspartate 308, and isoleucine 330 contribute to the UDP-N-acetyl-alpha-D-glucosamine site; that span reads RPVDL.

This sequence belongs to the EPSP synthase family. MurA subfamily.

The protein resides in the cytoplasm. The enzyme catalyses phosphoenolpyruvate + UDP-N-acetyl-alpha-D-glucosamine = UDP-N-acetyl-3-O-(1-carboxyvinyl)-alpha-D-glucosamine + phosphate. Its pathway is cell wall biogenesis; peptidoglycan biosynthesis. In terms of biological role, cell wall formation. Adds enolpyruvyl to UDP-N-acetylglucosamine. The polypeptide is UDP-N-acetylglucosamine 1-carboxyvinyltransferase (Dinoroseobacter shibae (strain DSM 16493 / NCIMB 14021 / DFL 12)).